Consider the following 481-residue polypeptide: Xylulose kinase (481 aa).

A substrate-binding site is contributed by Gln-81–His-82. Asp-239 acts as the Proton acceptor in catalysis.

This sequence belongs to the FGGY kinase family.

The catalysed reaction is D-xylulose + ATP = D-xylulose 5-phosphate + ADP + H(+). Catalyzes the phosphorylation of D-xylulose to D-xylulose 5-phosphate. The sequence is that of Xylulose kinase from Streptomyces rubiginosus.